The sequence spans 323 residues: Ribosomal RNA small subunit methyltransferase H (323 aa).

Residues Gly39–Tyr41, Asp57, Phe84, Asp103, and Gln110 each bind S-adenosyl-L-methionine.

The protein belongs to the methyltransferase superfamily. RsmH family.

It localises to the cytoplasm. It carries out the reaction cytidine(1402) in 16S rRNA + S-adenosyl-L-methionine = N(4)-methylcytidine(1402) in 16S rRNA + S-adenosyl-L-homocysteine + H(+). In terms of biological role, specifically methylates the N4 position of cytidine in position 1402 (C1402) of 16S rRNA. This is Ribosomal RNA small subunit methyltransferase H from Gluconobacter oxydans (strain 621H) (Gluconobacter suboxydans).